We begin with the raw amino-acid sequence, 102 residues long: Large ribosomal subunit protein uL24 (102 aa).

It belongs to the universal ribosomal protein uL24 family. Part of the 50S ribosomal subunit.

In terms of biological role, one of two assembly initiator proteins, it binds directly to the 5'-end of the 23S rRNA, where it nucleates assembly of the 50S subunit. One of the proteins that surrounds the polypeptide exit tunnel on the outside of the subunit. This Rhizobium leguminosarum bv. trifolii (strain WSM2304) protein is Large ribosomal subunit protein uL24.